Consider the following 761-residue polypeptide: Zinc finger protein 711 (761 aa).

C2H2-type zinc fingers lie at residues 383–408, 414–436, 476–499, 505–527, and 533–556; these read YPCH…HPDH, YQCT…LESH, HKCK…LAVH, HVCV…MRTH, and FHCQ…KSKH. Residues 562-584 form a C2H2-type 6; atypical zinc finger; it reads FKCGHCPQAFADDKELQRHAEIF. Positions 564, 567, and 580 each coordinate Zn(2+). C2H2-type zinc fingers lie at residues 590 to 613, 619 to 641, 647 to 670, 676 to 698, 704 to 727, and 733 to 755; these read HQCP…ISVH, HKCD…SETH, HQCR…LSVH, FKCK…MKTH, YQCQ…ISIH, and HRCD…IMRH.

This sequence belongs to the krueppel C2H2-type zinc-finger protein family. Present in ovary and brain but not in other tissues (at protein level).

Its subcellular location is the nucleus. The protein resides in the cytoplasm. Functionally, transcription regulator required for brain development. Probably acts as a transcription factor that binds to the promoter of target genes, leading to activate their expression. The chain is Zinc finger protein 711 (znf711) from Danio rerio (Zebrafish).